We begin with the raw amino-acid sequence, 560 residues long: Vanillyl-alcohol oxidase (560 aa).

The FAD-binding PCMH-type domain maps to 67–272; that stretch reads DYFLASAIVA…TKIGIWLMPN (206 aa). Residue tyrosine 108 is part of the active site. The residue at position 422 (histidine 422) is a Tele-8alpha-FAD histidine. Catalysis depends on residues tyrosine 503 and arginine 504.

This sequence to bacterial flavocytochrome p-cresol methyl hydroxylase. As to quaternary structure, homooctamer (tetramer of tightly interacting dimers). FAD is required as a cofactor.

The protein localises to the peroxisome. It is found in the cytoplasm. The enzyme catalyses 4-hydroxy-3-methoxy-benzenemethanol + O2 = vanillin + H2O2. Its activity is regulated as follows. Competitively inhibited by cinnamyl and coniferyl alcohols and by isoeugenol. Functionally, catalyzes the conversion of vanillin alcohol to vanillin, and also the conversion of a wide range of phenolic compounds bearing side chains of variable size at the para position of the aromatic ring. Crucial for the degradation of the secondary metabolites derived from the degradation of the lignin. Catalyzes besides the oxidation of 4-hydroxybenzyl alcohols, the oxidative deamination of 4-hydroxybenzylamines, the oxidative demethylation of 4-(methoxy-methyl)phenols and the oxidative hydration of 4-allylphenols. Most active with 4-allylphenols. This is Vanillyl-alcohol oxidase (VAOA) from Penicillium simplicissimum.